Here is a 129-residue protein sequence, read N- to C-terminus: Sm-like protein LSM4 (129 aa).

A Sm domain is found at 2–75 (LPLSLLKTAQ…IKYLRVPDEV (74 aa)). Residues 79–90 (VQEEKTRTDRKP) are compositionally biased toward basic and acidic residues. Residues 79-129 (VQEEKTRTDRKPPGVGRGRGRGVDDGGARGRGRGTSMGKMGGNRGAGRGRG) are disordered. Residues 111–129 (RGTSMGKMGGNRGAGRGRG) show a composition bias toward gly residues.

This sequence belongs to the snRNP Sm proteins family. Component of the heptameric LSM1-LSM7 complex that forms a seven-membered ring structure with a donut shape. The LSM subunits are arranged in the order LSM1, LSM2, LSM3, LSM6, LSM5, LSM7 and LSM4. LSM4 subunit interacts only with its two neighboring subunits, LSM1A or LSM1B and LSM7. Component of the heptameric LSM2-LSM8 complex that forms a seven-membered ring structure with a donut shape. The LSM subunits are arranged in the order LSM8, LSM2, LSM3, LSM6, LSM5, LSM7 and LSM4. LSM4 subunit interacts only with its two neighboring subunits, LSM8 and LSM7. Methylated by PMRT15/SKB1 in response to salt stress or abscisic acid (ABA) treatment. Expressed in roots, leaves, stems, flowers and siliques.

It localises to the cytoplasm. The protein resides in the nucleus. Functionally, component of LSM protein complexes, which are involved in RNA processing. Component of the cytoplasmic LSM1-LSM7 complex which is involved in mRNA degradation by promoting decapping and leading to accurate 5'-3' mRNA decay. The cytoplasmic LSM1-LSM7 complex regulates developmental gene expression by the decapping of specific development-related transcripts. Component of the nuclear LSM2-LSM8 complex which is involved splicing nuclear mRNAs. LSM2-LSM8 binds directly to the U6 small nuclear RNAs (snRNAs) and is essential for accurate splicing of selected development-related mRNAs through the stabilization of the spliceosomal U6 snRNA. Plays a critical role in the regulation of development-related gene expression. The chain is Sm-like protein LSM4 from Arabidopsis thaliana (Mouse-ear cress).